The sequence spans 256 residues: Imidazole glycerol phosphate synthase subunit HisF (256 aa).

Active-site residues include Asp12 and Asp131.

The protein belongs to the HisA/HisF family. In terms of assembly, heterodimer of HisH and HisF.

It is found in the cytoplasm. The enzyme catalyses 5-[(5-phospho-1-deoxy-D-ribulos-1-ylimino)methylamino]-1-(5-phospho-beta-D-ribosyl)imidazole-4-carboxamide + L-glutamine = D-erythro-1-(imidazol-4-yl)glycerol 3-phosphate + 5-amino-1-(5-phospho-beta-D-ribosyl)imidazole-4-carboxamide + L-glutamate + H(+). Its pathway is amino-acid biosynthesis; L-histidine biosynthesis; L-histidine from 5-phospho-alpha-D-ribose 1-diphosphate: step 5/9. IGPS catalyzes the conversion of PRFAR and glutamine to IGP, AICAR and glutamate. The HisF subunit catalyzes the cyclization activity that produces IGP and AICAR from PRFAR using the ammonia provided by the HisH subunit. This is Imidazole glycerol phosphate synthase subunit HisF from Pseudomonas entomophila (strain L48).